The primary structure comprises 252 residues: Probable transcriptional regulatory protein DSY2470 (252 aa).

The protein belongs to the TACO1 family.

The protein resides in the cytoplasm. The chain is Probable transcriptional regulatory protein DSY2470 from Desulfitobacterium hafniense (strain Y51).